Consider the following 1302-residue polypeptide: Cingulin-like protein 1 (1302 aa).

Residues 1 to 554 (MELYFGEYQH…ELTQQTNEET (554 aa)) form a head region. Residues 37–51 (AGSYGVSIRVQGIDG) carry the ZIM motif. The interval 75–104 (PFPPPVINNLPLHSSNGSVPKENSEELQLP) is disordered. A phosphoserine mark is found at S112 and S202. Disordered regions lie at residues 186–209 (KKPW…EDPA), 251–305 (FTSG…TPTS), and 364–392 (PGLQ…VDSA). Residues 195–204 (PSNSQPTSPS) show a composition bias toward polar residues. Basic and acidic residues predominate over residues 264–282 (AHPETKKTRPDVLPFRRQD). Residues S283, S297, and S298 each carry the phosphoserine modification. Low complexity predominate over residues 296 to 305 (SSSSSTTPTS). The span at 366–377 (LQRRGRSGKRNR) shows a compositional bias: basic residues. Residues 378 to 388 (INTDDRKRSRS) are compositionally biased toward basic and acidic residues. Phosphoserine occurs at positions 388, 391, and 486. Positions 604–1258 (NSTSEVKDLL…QLNSMKKDLR (655 aa)) form a coiled coil. Positions 655 to 664 (RSQHNEKVEE) are enriched in basic and acidic residues. The segment at 655 to 675 (RSQHNEKVEENSTLQQRLEES) is disordered. Position 708 is a phosphoserine (S708). 2 disordered regions span residues 903–929 (AAQG…SEQK) and 1263–1287 (PSKV…YEAP). A compositionally biased stretch (basic and acidic residues) spans 917–929 (QLSEKLKEESEQK). The segment at 1263–1302 (PSKVLDDMDDDDDLSTDGGSLYEAPVSYTFSKDSTVASQI) is tail.

Belongs to the cingulin family. In terms of assembly, homodimer or oligomer. Interacts with CD2AP and SH3BP1; probably part of a complex at cell junctions. As to expression, smooth muscle, spleen, testis, fetal brain, amygdala, corpus callosum, cerebellum, thalamus and subthalamic nucleus of adult brain.

It is found in the cell junction. Its subcellular location is the tight junction. May be involved in anchoring the apical junctional complex, especially tight junctions, to actin-based cytoskeletons. The sequence is that of Cingulin-like protein 1 (CGNL1) from Homo sapiens (Human).